Here is a 178-residue protein sequence, read N- to C-terminus: Gamma-crystallin S (178 aa).

Position 2 is an N-acetylserine (serine 2). An N-terminal arm region spans residues 2 to 5; that stretch reads SKAG. Beta/gamma crystallin 'Greek key' domains lie at 6–44 and 45–87; these read TKITFFEDKNFQGRHYDSDCDCADFHMYLSRCNSIRVEG and GTWA…RAVH. Positions 88-93 are connecting peptide; it reads LSSGGQ. 2 consecutive Beta/gamma crystallin 'Greek key' domains span residues 94–134 and 135–177; these read YKLQ…KVLE and GAWI…RRIV.

It belongs to the beta/gamma-crystallin family. As to quaternary structure, monomer.

Its function is as follows. Crystallins are the dominant structural components of the vertebrate eye lens. The chain is Gamma-crystallin S (CRYGS) from Bos taurus (Bovine).